Here is a 695-residue protein sequence, read N- to C-terminus: C6 finger domain transcription factor nscR (695 aa).

The zn(2)-C6 fungal-type DNA-binding region spans Cys17–Cys43. Residues Ser101 to Asp113 are compositionally biased toward low complexity. The disordered stretch occupies residues Ser101–Gly146.

It is found in the nucleus. Its function is as follows. Transcription factor that specifically regulates the neosartoricin B biosynthesis gene cluster. The polypeptide is C6 finger domain transcription factor nscR (Arthroderma otae (strain ATCC MYA-4605 / CBS 113480) (Microsporum canis)).